The chain runs to 269 residues: Tryptophan synthase alpha chain (269 aa).

Residues Glu-49 and Asp-60 each act as proton acceptor in the active site.

Belongs to the TrpA family. Tetramer of two alpha and two beta chains.

It catalyses the reaction (1S,2R)-1-C-(indol-3-yl)glycerol 3-phosphate + L-serine = D-glyceraldehyde 3-phosphate + L-tryptophan + H2O. It functions in the pathway amino-acid biosynthesis; L-tryptophan biosynthesis; L-tryptophan from chorismate: step 5/5. The alpha subunit is responsible for the aldol cleavage of indoleglycerol phosphate to indole and glyceraldehyde 3-phosphate. The polypeptide is Tryptophan synthase alpha chain (Pseudomonas putida (strain W619)).